The primary structure comprises 853 residues: DNA mismatch repair protein MutS (853 aa).

Position 613-620 (613-620 (GPNMGGKS)) interacts with ATP.

It belongs to the DNA mismatch repair MutS family.

Functionally, this protein is involved in the repair of mismatches in DNA. It is possible that it carries out the mismatch recognition step. This protein has a weak ATPase activity. The polypeptide is DNA mismatch repair protein MutS (Vibrio parahaemolyticus serotype O3:K6 (strain RIMD 2210633)).